The sequence spans 99 residues: MSQISRDEVAHLARLARLALTEDELDSFAGQLDAILTHVSQIQAVDVTGVEATDNPLKDVNVMRADQTAPCLTQEEALAEAPAAVDGRFAVPQILGDSE.

Belongs to the GatC family. In terms of assembly, heterotrimer of A, B and C subunits.

The enzyme catalyses L-glutamyl-tRNA(Gln) + L-glutamine + ATP + H2O = L-glutaminyl-tRNA(Gln) + L-glutamate + ADP + phosphate + H(+). It carries out the reaction L-aspartyl-tRNA(Asn) + L-glutamine + ATP + H2O = L-asparaginyl-tRNA(Asn) + L-glutamate + ADP + phosphate + 2 H(+). Allows the formation of correctly charged Asn-tRNA(Asn) or Gln-tRNA(Gln) through the transamidation of misacylated Asp-tRNA(Asn) or Glu-tRNA(Gln) in organisms which lack either or both of asparaginyl-tRNA or glutaminyl-tRNA synthetases. The reaction takes place in the presence of glutamine and ATP through an activated phospho-Asp-tRNA(Asn) or phospho-Glu-tRNA(Gln). This is Aspartyl/glutamyl-tRNA(Asn/Gln) amidotransferase subunit C from Mycobacterium marinum (strain ATCC BAA-535 / M).